A 428-amino-acid chain; its full sequence is UPF0761 membrane protein TERTU_3006 (428 aa).

The next 7 membrane-spanning stretches (helical) occupy residues 47–67 (LFAL…IPAF), 104–124 (LSGV…RNIE), 143–163 (YLLY…AFLL), 189–209 (VVPW…VPNC), 218–238 (IGGV…GYIV), 248–268 (GAFA…TIIL), and 292–312 (MIVV…GESV).

Belongs to the UPF0761 family.

The protein localises to the cell inner membrane. The polypeptide is UPF0761 membrane protein TERTU_3006 (Teredinibacter turnerae (strain ATCC 39867 / T7901)).